We begin with the raw amino-acid sequence, 1381 residues long: Hepatocyte growth factor receptor (1381 aa).

The N-terminal stretch at 1–24 is a signal peptide; that stretch reads MKAPAVLAPGILVLLFTLVQKSDG. Over 25–934 the chain is Extracellular; the sequence is ECKEALVKSE…VQPDQNFTGL (910 aa). In terms of domain architecture, Sema spans 27-515; sequence KEALVKSEMN…TGKKITKIPL (489 aa). Asn-45 carries N-linked (GlcNAc...) asparagine glycosylation. Intrachain disulfides connect Cys-95–Cys-101, Cys-98–Cys-160, Cys-133–Cys-141, and Cys-172–Cys-175. N-linked (GlcNAc...) asparagine glycosylation occurs at Asn-106. Residues Asn-202 and Asn-358 are each glycosylated (N-linked (GlcNAc...) asparagine). 2 disulfide bridges follow: Cys-298-Cys-363 and Cys-385-Cys-397. Residues Asn-399, Asn-405, and Asn-449 are each glycosylated (N-linked (GlcNAc...) asparagine). Cystine bridges form between Cys-520/Cys-538, Cys-526/Cys-561, Cys-529/Cys-545, and Cys-541/Cys-551. Residue Asn-553 is glycosylated (N-linked (GlcNAc...) asparagine). IPT/TIG domains lie at 563–655, 657–739, and 742–836; these read PTIY…FSYV, PIIT…FSYR, and PIVY…LIYV. A glycan (O-linked (Man) threonine) is linked at Thr-582. Residues Asn-607 and Asn-635 are each glycosylated (N-linked (GlcNAc...) asparagine). O-linked (Man) threonine glycans are attached at residues Thr-676 and Thr-761. Asn-785, Asn-879, and Asn-930 each carry an N-linked (GlcNAc...) asparagine glycan. The helical transmembrane segment at 935-955 threads the bilayer; sequence IVGVVSISIILLLLLGLFLWL. The Cytoplasmic portion of the chain corresponds to 956–1381; it reads KRRKQIKDLG…QDNVDGEVDT (426 aa). At Ser-966 the chain carries Phosphoserine. Position 977 is a phosphothreonine (Thr-977). A phosphoserine mark is found at Ser-990, Ser-997, and Ser-1000. Position 1003 is a phosphotyrosine (Tyr-1003). The region spanning 1078-1345 is the Protein kinase domain; sequence VHFNEVIGRG…RISAIFSTFI (268 aa). Residues 1084-1092 and Lys-1110 each bind ATP; that span reads IGRGHFGCV. The Proton acceptor role is filled by Asp-1204. The interval 1212–1381 is interaction with RANBP9; that stretch reads LDEKFTVKVA…QDNVDGEVDT (170 aa). Tyr-1230 is modified (phosphotyrosine). 2 positions are modified to phosphotyrosine; by autocatalysis: Tyr-1234 and Tyr-1235. The residue at position 1289 (Thr-1289) is a Phosphothreonine. The interval 1320-1359 is interaction with MUC20; the sequence is WHPKAELRPSFSELVSRISAIFSTFIGEHYVHVNATYVNV. Residues Tyr-1349 and Tyr-1356 each carry the phosphotyrosine; by autocatalysis modification. Tyr-1365 carries the phosphotyrosine modification.

Belongs to the protein kinase superfamily. Tyr protein kinase family. In terms of assembly, heterodimer made of an alpha chain (50 kDa) and a beta chain (145 kDa) which are disulfide linked. Binds PLXNB1. Interacts when phosphorylated with downstream effectors including STAT3, PIK3R1, SRC, PCLG1, GRB2 and GAB1. Interacts with SPSB1, SPSB2 and SPSB4. Interacts with INPP5D/SHIP1. When phosphorylated at Tyr-1356, interacts with INPPL1/SHIP2. Interacts with RANBP9 and RANBP10, as well as SPSB1, SPSB2, SPSB3 and SPSB4. SPSB1 binding occurs in the presence and in the absence of HGF, however HGF treatment has a positive effect on this interaction. Interacts with MUC20; prevents interaction with GRB2 and suppresses hepatocyte growth factor-induced cell proliferation. Interacts with GRB10. Interacts with PTPN1 and PTPN2. Interacts with HSP90AA1 and HSP90AB1; the interaction suppresses MET kinase activity. Interacts with tensin TNS3. Interacts (when phosphorylated) with tensin TNS4 (via SH2 domain); the interaction increases MET protein stability by inhibiting MET endocytosis and subsequent lysosomal degradation. In terms of processing, autophosphorylated in response to ligand binding on Tyr-1234 and Tyr-1235 in the kinase domain leading to further phosphorylation of Tyr-1349 and Tyr-1356 in the C-terminal multifunctional docking site. Dephosphorylated by PTPRJ at Tyr-1349 and Tyr-1365. Dephosphorylated by PTPN1 and PTPN2. Post-translationally, ubiquitinated. Ubiquitination by CBL regulates the receptor stability and activity through proteasomal degradation. O-mannosylation of IPT/TIG domains by TMEM260 is required for protein maturation. O-mannosylated residues are composed of single mannose glycans that are not elongated or modified.

The protein localises to the membrane. It carries out the reaction L-tyrosyl-[protein] + ATP = O-phospho-L-tyrosyl-[protein] + ADP + H(+). In its inactive state, the C-terminal tail interacts with the catalytic domain and inhibits the kinase activity. Upon ligand binding, the C-terminal tail is displaced and becomes phosphorylated, thus increasing the kinase activity. Functionally, receptor tyrosine kinase that transduces signals from the extracellular matrix into the cytoplasm by binding to hepatocyte growth factor/HGF ligand. Regulates many physiological processes including proliferation, scattering, morphogenesis and survival. Ligand binding at the cell surface induces autophosphorylation of MET on its intracellular domain that provides docking sites for downstream signaling molecules. Following activation by ligand, interacts with the PI3-kinase subunit PIK3R1, PLCG1, SRC, GRB2, STAT3 or the adapter GAB1. Recruitment of these downstream effectors by MET leads to the activation of several signaling cascades including the RAS-ERK, PI3 kinase-AKT, or PLCgamma-PKC. The RAS-ERK activation is associated with the morphogenetic effects while PI3K/AKT coordinates prosurvival effects. During embryonic development, MET signaling plays a role in gastrulation, development and migration of muscles and neuronal precursors, angiogenesis and kidney formation. In adults, participates in wound healing as well as organ regeneration and tissue remodeling. Also promotes differentiation and proliferation of hematopoietic cells. In Equus caballus (Horse), this protein is Hepatocyte growth factor receptor (MET).